A 423-amino-acid polypeptide reads, in one-letter code: Ferrochelatase, mitochondrial (423 aa).

The N-terminal 54 residues, 1–54, are a transit peptide targeting the mitochondrion; it reads MRSLGANMAAALRAAGVLLRDPLVSSSWRVYQPWRWKSVAAAAAATTETAQHAQ. Lys-57 is modified (N6-acetyllysine). Protoporphyrin IX contacts are provided by Arg-115, Tyr-123, and Ser-130. Lys-138 is subject to N6-succinyllysine. Cys-196 lines the [2Fe-2S] cluster pocket. Residues His-230 and Asp-383 contribute to the active site. [2Fe-2S] cluster is bound by residues Cys-403, Cys-406, and Cys-411. Residue Lys-415 is modified to N6-acetyllysine; alternate. N6-succinyllysine; alternate is present on Lys-415.

This sequence belongs to the ferrochelatase family. In terms of assembly, homodimer. Homotetramer. Interaction with PGRMC1; the interaction results in decreased FECH activity. Interacts with ABCB10 and SLC25A37; this interaction forms an oligomeric complex. Forms a complex with ABCB7 and ABCB10, where a dimeric FECH bridges ABCB7 and ABCB10 homodimers; this complex may be required for cellular iron homeostasis, mitochondrial function and heme biosynthesis. Interacts with ABCB7 and ABCB10. [2Fe-2S] cluster is required as a cofactor.

The protein resides in the mitochondrion inner membrane. The catalysed reaction is heme b + 2 H(+) = protoporphyrin IX + Fe(2+). It participates in porphyrin-containing compound metabolism; protoheme biosynthesis; protoheme from protoporphyrin-IX: step 1/1. In terms of biological role, catalyzes the ferrous insertion into protoporphyrin IX and participates in the terminal step in the heme biosynthetic pathway. This is Ferrochelatase, mitochondrial from Pan troglodytes (Chimpanzee).